We begin with the raw amino-acid sequence, 325 residues long: tRNA N6-adenosine threonylcarbamoyltransferase (325 aa).

Histidine 107 and histidine 111 together coordinate Fe cation. Residues 129–133, aspartate 162, glycine 175, and asparagine 265 contribute to the substrate site; that span reads LVSGG. Aspartate 293 is a binding site for Fe cation.

This sequence belongs to the KAE1 / TsaD family. Fe(2+) is required as a cofactor.

It localises to the cytoplasm. The catalysed reaction is L-threonylcarbamoyladenylate + adenosine(37) in tRNA = N(6)-L-threonylcarbamoyladenosine(37) in tRNA + AMP + H(+). In terms of biological role, required for the formation of a threonylcarbamoyl group on adenosine at position 37 (t(6)A37) in tRNAs that read codons beginning with adenine. Is involved in the transfer of the threonylcarbamoyl moiety of threonylcarbamoyl-AMP (TC-AMP) to the N6 group of A37, together with TsaE and TsaB. TsaD likely plays a direct catalytic role in this reaction. The sequence is that of tRNA N6-adenosine threonylcarbamoyltransferase from Sulfurimonas denitrificans (strain ATCC 33889 / DSM 1251) (Thiomicrospira denitrificans (strain ATCC 33889 / DSM 1251)).